Reading from the N-terminus, the 338-residue chain is MLAVRSLQHLTTVIFITAYGLVLAWYIVFGASPLHRCIYAVRPAGAHNDTALVWMKINQTLLFLGPPTAPPGGAWTPHARVCYANIIEGRAVSLPAIPGAMSRRVMNVHEAVNCLEALWDTQMRLVVVGWFLYLAFVALHQRRCMFGVVSPAHSMVAPATYLLNYAGRIVSSVFLQYPYTKITRLLCELSVQRQTLVQLFEADPVTFLYHRPAIGVIVGCELLLRFVALGLIVGTALISRGACAITHPLFLTITTWCFVSIIALTELYFILRRGSAPKNAEPAAPRGRSKGWSGVCGRCCSIILSGIAVRLCYIAVVAGVVLVALRYEQEIQRRLFDL.

Residues 1 to 30 (MLAVRSLQHLTTVIFITAYGLVLAWYIVFG) form the signal peptide. Over 31-121 (ASPLHRCIYA…VNCLEALWDT (91 aa)) the chain is Extracellular. Positions 31–121 (ASPLHRCIYA…VNCLEALWDT (91 aa)) are involved in fusion. Asn-48 and Asn-58 each carry an N-linked (GlcNAc...) asparagine; by host glycan. Residues 122–140 (QMRLVVVGWFLYLAFVALH) traverse the membrane as a helical segment. The Cytoplasmic segment spans residues 141 to 212 (QRRCMFGVVS…DPVTFLYHRP (72 aa)). The helical transmembrane segment at 213–233 (AIGVIVGCELLLRFVALGLIV) threads the bilayer. At 234-243 (GTALISRGAC) the chain is on the extracellular side. Residues 244-264 (AITHPLFLTITTWCFVSIIAL) form a helical membrane-spanning segment. Over 265–301 (TELYFILRRGSAPKNAEPAAPRGRSKGWSGVCGRCCS) the chain is Cytoplasmic. The segment at 265–301 (TELYFILRRGSAPKNAEPAAPRGRSKGWSGVCGRCCS) is interaction with UL20. Residues 302–322 (IILSGIAVRLCYIAVVAGVVL) form a helical membrane-spanning segment. Topologically, residues 323–338 (VALRYEQEIQRRLFDL) are extracellular.

The protein belongs to the alphaherpesvirinae glycoprotein K family. Interacts (via UL20 interaction region) with protein UL20 (via N-terminus); this interaction probably plays a role in the coordinate transport of protein UL20 and gK to the trans-Golgi network (TGN), and is required for the cell surface expression of gK. In terms of processing, N-glycosylated.

Its subcellular location is the host cell membrane. It is found in the host endosome membrane. It localises to the host Golgi apparatus membrane. Functionally, glycoprotein that probably modulates membrane fusion events during secondary envelopment of cytoplasmic capsids that bud into specific trans-Golgi network (TGN)-derived membranes. Also plays a role, together with gB, in virus-induced cell-to-cell fusion (syncytia formation). Seems to block fusion of virions with infected-cell membranes. The polypeptide is Envelope glycoprotein K (gK) (Human herpesvirus 2 (strain HG52) (HHV-2)).